Reading from the N-terminus, the 437-residue chain is Elongator complex protein 4 (437 aa).

Residues 179-247 form a disordered region; the sequence is FSKSSSPTTP…TKTGSQDSPL (69 aa). The span at 181–192 shows a compositional bias: polar residues; sequence KSSSPTTPSLEQ. The residue at position 183 (Ser183) is a Phosphoserine. The span at 220-237 shows a compositional bias: low complexity; that stretch reads SANNNNNNNNNSSSVTSS. Ser242 carries the post-translational modification Phosphoserine.

The protein belongs to the ELP4 family. In terms of assembly, component of the elongator complex composed of Elp1, Elp2, Elp3, Elp4, Elp5 and Elp6. The elongator complex associates with and stabilizes microtubules; efficient interaction requires the full complex.

The protein resides in the cytoplasm. It localises to the nucleus. It is found in the cytoskeleton. The protein localises to the spindle. It participates in tRNA modification; 5-methoxycarbonylmethyl-2-thiouridine-tRNA biosynthesis. Its function is as follows. Component of the elongator complex, which is required for multiple tRNA modifications, including mcm5U (5-methoxycarbonylmethyl uridine), mcm5s2U (5-methoxycarbonylmethyl-2-thiouridine), and ncm5U (5-carbamoylmethyl uridine). The elongator complex catalyzes the formation of carboxymethyluridine in the wobble base at position 34 in tRNAs. Binding by the elongator complex stabilizes microtubules and promotes their growth. This induces central spindle asymmetry, promoting polarized signaling endosome trafficking during asymmetric cell division and cell fate assignation of sensory organ precursor cells. In Drosophila melanogaster (Fruit fly), this protein is Elongator complex protein 4.